Consider the following 304-residue polypeptide: Sulfate adenylyltransferase subunit 2 (304 aa).

It belongs to the PAPS reductase family. CysD subfamily. Heterodimer composed of CysD, the smaller subunit, and CysN.

The enzyme catalyses sulfate + ATP + H(+) = adenosine 5'-phosphosulfate + diphosphate. The protein operates within sulfur metabolism; hydrogen sulfide biosynthesis; sulfite from sulfate: step 1/3. With CysN forms the ATP sulfurylase (ATPS) that catalyzes the adenylation of sulfate producing adenosine 5'-phosphosulfate (APS) and diphosphate, the first enzymatic step in sulfur assimilation pathway. APS synthesis involves the formation of a high-energy phosphoric-sulfuric acid anhydride bond driven by GTP hydrolysis by CysN coupled to ATP hydrolysis by CysD. The sequence is that of Sulfate adenylyltransferase subunit 2 from Acinetobacter baylyi (strain ATCC 33305 / BD413 / ADP1).